We begin with the raw amino-acid sequence, 361 residues long: Very-long-chain 3-oxoacyl-CoA reductase (361 aa).

The chain crosses the membrane as a helical span at residues 32 to 52; it reads PALILSTVGAAFLLRYTLSIF. The NADP(+) site is built by Val79, Asp133, Asn163, Arg198, Tyr236, Lys240, Val269, and Ser271. Residue Tyr236 is the Proton donor of the active site. Lys240 functions as the Lowers pKa of active site Tyr in the catalytic mechanism.

This sequence belongs to the short-chain dehydrogenases/reductases (SDR) family.

The protein resides in the endoplasmic reticulum membrane. The enzyme catalyses a very-long-chain (3R)-3-hydroxyacyl-CoA + NADP(+) = a very-long-chain 3-oxoacyl-CoA + NADPH + H(+). It functions in the pathway lipid metabolism; fatty acid biosynthesis. Its function is as follows. Component of the microsomal membrane bound fatty acid elongation system, which produces the 26-carbon very long-chain fatty acids (VLCFA) from palmitate. Catalyzes the reduction of the 3-ketoacyl-CoA intermediate that is formed in each cycle of fatty acid elongation. VLCFAs serve as precursors for ceramide and sphingolipids. In Cryptococcus neoformans var. neoformans serotype D (strain B-3501A) (Filobasidiella neoformans), this protein is Very-long-chain 3-oxoacyl-CoA reductase.